We begin with the raw amino-acid sequence, 185 residues long: MVLSSQLSVGMFISTKDGLYKVTSVSKVAGPKGESFIKVALQAADSDVVIERNFKATQEVKEAQFETRTLEYLYLEDESYLFLDLGNYEKLFIPQEIMKDNFLFLKAGVTVSAMVYDNVVFSVELPHFLELMVSKTDFPGDSLSLSGGVKKALLETGIEVMVPPFVEIGDVIKIDTRTCEYIQRV.

This sequence belongs to the elongation factor P family.

It is found in the cytoplasm. It participates in protein biosynthesis; polypeptide chain elongation. Involved in peptide bond synthesis. Stimulates efficient translation and peptide-bond synthesis on native or reconstituted 70S ribosomes in vitro. Probably functions indirectly by altering the affinity of the ribosome for aminoacyl-tRNA, thus increasing their reactivity as acceptors for peptidyl transferase. In Chlamydia pneumoniae (Chlamydophila pneumoniae), this protein is Elongation factor P 1 (efp1).